The sequence spans 94 residues: ESAT-6-like protein EsxO (94 aa).

Belongs to the WXG100 family. ESAT-6 subfamily. In terms of assembly, forms a complex with EsxP.

It localises to the secreted. This chain is ESAT-6-like protein EsxO, found in Mycobacterium tuberculosis (strain CDC 1551 / Oshkosh).